Consider the following 430-residue polypeptide: Enolase (430 aa).

Glutamine 163 is a binding site for (2R)-2-phosphoglycerate. The active-site Proton donor is glutamate 205. Positions 242, 287, and 314 each coordinate Mg(2+). The (2R)-2-phosphoglycerate site is built by lysine 339, arginine 368, serine 369, and lysine 390. Lysine 339 functions as the Proton acceptor in the catalytic mechanism.

The protein belongs to the enolase family. The cofactor is Mg(2+).

Its subcellular location is the cytoplasm. It localises to the secreted. The protein localises to the cell surface. It catalyses the reaction (2R)-2-phosphoglycerate = phosphoenolpyruvate + H2O. It functions in the pathway carbohydrate degradation; glycolysis; pyruvate from D-glyceraldehyde 3-phosphate: step 4/5. Functionally, catalyzes the reversible conversion of 2-phosphoglycerate (2-PG) into phosphoenolpyruvate (PEP). It is essential for the degradation of carbohydrates via glycolysis. This is Enolase from Bacillus licheniformis (strain ATCC 14580 / DSM 13 / JCM 2505 / CCUG 7422 / NBRC 12200 / NCIMB 9375 / NCTC 10341 / NRRL NRS-1264 / Gibson 46).